Reading from the N-terminus, the 841-residue chain is Envelope glycoprotein H (841 aa).

The first 17 residues, 1-17 (MFALVLAVVILPLWTTA), serve as a signal peptide directing secretion. 3 N-linked (GlcNAc...) asparagine; by host glycosylation sites follow: Asn-18, Asn-45, and Asn-217. Residues 18-802 (NKSYVTPTPA…ERRQAIRMSG (785 aa)) are Virion surface-facing. The interaction with gL stretch occupies residues 246–309 (DSGRVEVNIG…DPGPSYRVYL (64 aa)). Residues Asn-317, Asn-499, Asn-522, Asn-760, and Asn-783 are each glycosylated (N-linked (GlcNAc...) asparagine; by host). Residues 803–823 (QYLGASLGGAFLAVVGFGIIG) form a helical membrane-spanning segment. Residues 824-841 (WMLCGNSRLREYNKIPLT) are Intravirion-facing.

This sequence belongs to the herpesviridae glycoprotein H family. In terms of assembly, interacts with glycoprotein L (gL); this interaction is necessary for the correct processing and cell surface expression of gH. The heterodimer gH/gL seems to interact with gB trimers during fusion. In terms of processing, N-glycosylated, O-glycosylated, and sialylated.

It is found in the virion membrane. Its subcellular location is the host cell membrane. The protein resides in the host endosome membrane. Its function is as follows. The heterodimer glycoprotein H-glycoprotein L is required for the fusion of viral and plasma membranes leading to virus entry into the host cell. Following initial binding to host receptor, membrane fusion is mediated by the fusion machinery composed of gB and the heterodimer gH/gL. May also be involved in the fusion between the virion envelope and the outer nuclear membrane during virion morphogenesis. The chain is Envelope glycoprotein H from Varicella-zoster virus (strain Oka vaccine) (HHV-3).